A 415-amino-acid chain; its full sequence is PRKCA-binding protein (415 aa).

Residues 22–105 (KVTLQKDAQN…EVTIHYNKLQ (84 aa)) form the PDZ domain. Zn(2+)-binding residues include Cys44 and Cys46. Position 82 is a phosphothreonine (Thr82). The AH domain occupies 144–357 (LCNDGLVKRL…CYAVLRDADV (214 aa)). A disordered region spans residues 376–415 (EEFTDGEEEEEEEDTAAGEPARDTRGAAGPLDKGGSWCDS). Acidic residues predominate over residues 377-391 (EFTDGEEEEEEEDTA). Cys413 carries S-palmitoyl cysteine; by DHHC8 lipidation.

As to quaternary structure, monomer and homodimer. Interacts with CXADR. Interacts presynaptically with the glutamate receptors GRIA2, GRIA3, GRIK3, isoform 3 of GRIA4, isoform A of GRM4, GRM7 and GRM8; with NAPA and NAPB; and with BTG2. The interaction with NAPA and NAPB disrupts the interaction with GRIA2, conducting to the internalization of GRIA2. Interacts with PRKCA; with the amine transporters SLC6A2 and SLC6A3; with the channels ASIC1 and ASIC2; with the GTP-binding proteins ARF1 and ARF3; with the ephrin receptor tyrosine kinases EPHA7, EPHB1 and EPHB2; with ERBB2 and through its PDZ domain with the C-terminal tail of PRLHR. Interacts with UNC5A. Interacts (via AH domain) with NCS1/FREQ; in a calcium-dependent manner. Interacts with F-actin and associates with the ARP2/3 complex. Interacts (via PDZ domain) with ARF1 (activated); the interaction blocks Arp2/3 complex inhibition. Interacts with SORCS3. Phosphorylation at Thr-82 appears to inhibit the interaction with AMPA receptors. Post-translationally, palmitoylation on Cys-413 is essential for long-term synaptic depression (LTD).

The protein resides in the cytoplasm. The protein localises to the perinuclear region. It is found in the membrane. Its subcellular location is the postsynaptic density. It localises to the synapse. The protein resides in the synaptosome. The protein localises to the cytoskeleton. Probable adapter protein that bind to and organize the subcellular localization of a variety of membrane proteins containing some PDZ recognition sequence. Involved in the clustering of various receptors, possibly by acting at the receptor internalization level. Plays a role in synaptic plasticity by regulating the trafficking and internalization of AMPA receptors. May be regulated upon PRKCA activation. May regulate ASIC1/ASIC3 channel. Regulates actin polymerization by inhibiting the actin-nucleating activity of the Arp2/3 complex; the function is competitive with nucleation promoting factors and is linked to neuronal morphology regulation and AMPA receptor (AMPAR) endocytosis. Via interaction with the Arp2/3 complex involved in regulation of synaptic plasicity of excitatory synapses and required for spine shrinkage during long-term depression (LTD). Involved in regulation of astrocyte morphology, antagonistic to Arp2/3 complex activator WASL/N-WASP function. This Pongo abelii (Sumatran orangutan) protein is PRKCA-binding protein (PICK1).